A 339-amino-acid polypeptide reads, in one-letter code: UDP-N-acetylglucosamine--N-acetylmuramyl-(pentapeptide) pyrophosphoryl-undecaprenol N-acetylglucosamine transferase (339 aa).

UDP-N-acetyl-alpha-D-glucosamine-binding positions include 11 to 13 (TGG), Asn127, Arg170, Ser188, Ile235, and Gln280.

It belongs to the glycosyltransferase 28 family. MurG subfamily.

The protein localises to the cell inner membrane. The catalysed reaction is di-trans,octa-cis-undecaprenyl diphospho-N-acetyl-alpha-D-muramoyl-L-alanyl-D-glutamyl-meso-2,6-diaminopimeloyl-D-alanyl-D-alanine + UDP-N-acetyl-alpha-D-glucosamine = di-trans,octa-cis-undecaprenyl diphospho-[N-acetyl-alpha-D-glucosaminyl-(1-&gt;4)]-N-acetyl-alpha-D-muramoyl-L-alanyl-D-glutamyl-meso-2,6-diaminopimeloyl-D-alanyl-D-alanine + UDP + H(+). It functions in the pathway cell wall biogenesis; peptidoglycan biosynthesis. Its function is as follows. Cell wall formation. Catalyzes the transfer of a GlcNAc subunit on undecaprenyl-pyrophosphoryl-MurNAc-pentapeptide (lipid intermediate I) to form undecaprenyl-pyrophosphoryl-MurNAc-(pentapeptide)GlcNAc (lipid intermediate II). In Thermotoga neapolitana (strain ATCC 49049 / DSM 4359 / NBRC 107923 / NS-E), this protein is UDP-N-acetylglucosamine--N-acetylmuramyl-(pentapeptide) pyrophosphoryl-undecaprenol N-acetylglucosamine transferase.